The chain runs to 263 residues: uncharacterized protein (263 aa).

A run of 7 helical transmembrane segments spans residues 1–21 (MLVI…ILCQ), 38–58 (LFLL…HYCY), 82–102 (IPIS…CMMV), 118–138 (GISI…IFTY), 151–171 (GKFG…ANLL), 196–216 (FALI…VIPT), and 230–250 (FWVK…VQYV).

Its subcellular location is the membrane. This is an uncharacterized protein from Saccharomyces cerevisiae (strain ATCC 204508 / S288c) (Baker's yeast).